The primary structure comprises 367 residues: DNA replication and repair protein RecF (367 aa).

30–37 is a binding site for ATP; the sequence is GANGSGKT.

This sequence belongs to the RecF family.

The protein localises to the cytoplasm. In terms of biological role, the RecF protein is involved in DNA metabolism; it is required for DNA replication and normal SOS inducibility. RecF binds preferentially to single-stranded, linear DNA. It also seems to bind ATP. The chain is DNA replication and repair protein RecF from Pseudomonas fluorescens (strain SBW25).